The primary structure comprises 279 residues: Diaminopimelate epimerase (279 aa).

Residues Asn11 and Asn64 each coordinate substrate. Cys73 (proton donor) is an active-site residue. Residues Gly74 to Asn75, Asn170, and Glu187 to Arg188 each bind substrate. Catalysis depends on Cys196, which acts as the Proton acceptor. Gly197–Ser198 provides a ligand contact to substrate. Positions Asn255–Arg279 are disordered.

The protein belongs to the diaminopimelate epimerase family. Homodimer.

The protein localises to the cytoplasm. The enzyme catalyses (2S,6S)-2,6-diaminopimelate = meso-2,6-diaminopimelate. It participates in amino-acid biosynthesis; L-lysine biosynthesis via DAP pathway; DL-2,6-diaminopimelate from LL-2,6-diaminopimelate: step 1/1. Catalyzes the stereoinversion of LL-2,6-diaminopimelate (L,L-DAP) to meso-diaminopimelate (meso-DAP), a precursor of L-lysine. The chain is Diaminopimelate epimerase from Methanopyrus kandleri (strain AV19 / DSM 6324 / JCM 9639 / NBRC 100938).